Reading from the N-terminus, the 257-residue chain is UPF0246 protein Mmc1_3117 (257 aa).

It belongs to the UPF0246 family.

The protein is UPF0246 protein Mmc1_3117 of Magnetococcus marinus (strain ATCC BAA-1437 / JCM 17883 / MC-1).